The sequence spans 412 residues: Probable tRNA sulfurtransferase (412 aa).

In terms of domain architecture, THUMP spans 58 to 163 (DEVIKQLGYV…SEGTYIYVGK (106 aa)). ATP contacts are provided by residues 181–182 (ML), 206–207 (HF), arginine 265, glycine 287, and glutamine 296.

The protein belongs to the ThiI family.

It is found in the cytoplasm. It carries out the reaction [ThiI sulfur-carrier protein]-S-sulfanyl-L-cysteine + a uridine in tRNA + 2 reduced [2Fe-2S]-[ferredoxin] + ATP + H(+) = [ThiI sulfur-carrier protein]-L-cysteine + a 4-thiouridine in tRNA + 2 oxidized [2Fe-2S]-[ferredoxin] + AMP + diphosphate. The catalysed reaction is [ThiS sulfur-carrier protein]-C-terminal Gly-Gly-AMP + S-sulfanyl-L-cysteinyl-[cysteine desulfurase] + AH2 = [ThiS sulfur-carrier protein]-C-terminal-Gly-aminoethanethioate + L-cysteinyl-[cysteine desulfurase] + A + AMP + 2 H(+). It functions in the pathway cofactor biosynthesis; thiamine diphosphate biosynthesis. In terms of biological role, catalyzes the ATP-dependent transfer of a sulfur to tRNA to produce 4-thiouridine in position 8 of tRNAs, which functions as a near-UV photosensor. Also catalyzes the transfer of sulfur to the sulfur carrier protein ThiS, forming ThiS-thiocarboxylate. This is a step in the synthesis of thiazole, in the thiamine biosynthesis pathway. The sulfur is donated as persulfide by IscS. The protein is Probable tRNA sulfurtransferase of Acholeplasma laidlawii (strain PG-8A).